The following is a 612-amino-acid chain: Sulfite reductase [NADPH] hemoprotein beta-component (612 aa).

The tract at residues methionine 1–glutamate 26 is disordered. [4Fe-4S] cluster is bound by residues cysteine 469, cysteine 475, cysteine 514, and cysteine 518. A siroheme-binding site is contributed by cysteine 518.

The protein belongs to the nitrite and sulfite reductase 4Fe-4S domain family. In terms of assembly, alpha(8)-beta(8). The alpha component is a flavoprotein, the beta component is a hemoprotein. Requires siroheme as cofactor. The cofactor is [4Fe-4S] cluster.

The enzyme catalyses hydrogen sulfide + 3 NADP(+) + 3 H2O = sulfite + 3 NADPH + 4 H(+). Its pathway is sulfur metabolism; hydrogen sulfide biosynthesis; hydrogen sulfide from sulfite (NADPH route): step 1/1. Its function is as follows. Component of the sulfite reductase complex that catalyzes the 6-electron reduction of sulfite to sulfide. This is one of several activities required for the biosynthesis of L-cysteine from sulfate. This is Sulfite reductase [NADPH] hemoprotein beta-component from Methylorubrum extorquens (strain PA1) (Methylobacterium extorquens).